Reading from the N-terminus, the 108-residue chain is Protein SMALL AUXIN UP-REGULATED RNA 51 (108 aa).

Belongs to the ARG7 family. In terms of tissue distribution, expressed in organ primordia. Hardly observed in leaves.

The protein resides in the cell membrane. Functionally, provide a mechanistic link between auxin and plasma membrane H(+)-ATPases (PM H(+)-ATPases, e.g. AHA1 and AHA2), and triggers PM H(+)-ATPases activity by promoting phosphorylation of their C-terminal autoinhibitory domain as a result of PP2C-D subfamily of type 2C phosphatases inhibition, thus leading to the acidification of the apoplast and the facilitation of solutes and water uptake to drive cell expansion. Triggers plant growth probably by promoting cell elongation. Regulates branch angles and bending. This is Protein SMALL AUXIN UP-REGULATED RNA 51 from Arabidopsis thaliana (Mouse-ear cress).